Here is a 197-residue protein sequence, read N- to C-terminus: Probable nicotinate-nucleotide adenylyltransferase (197 aa).

This sequence belongs to the NadD family.

It catalyses the reaction nicotinate beta-D-ribonucleotide + ATP + H(+) = deamido-NAD(+) + diphosphate. Its pathway is cofactor biosynthesis; NAD(+) biosynthesis; deamido-NAD(+) from nicotinate D-ribonucleotide: step 1/1. In terms of biological role, catalyzes the reversible adenylation of nicotinate mononucleotide (NaMN) to nicotinic acid adenine dinucleotide (NaAD). The protein is Probable nicotinate-nucleotide adenylyltransferase of Porphyromonas gingivalis (strain ATCC 33277 / DSM 20709 / CIP 103683 / JCM 12257 / NCTC 11834 / 2561).